Here is a 197-residue protein sequence, read N- to C-terminus: Pyridoxal 5'-phosphate synthase subunit PdxT (197 aa).

Glycine 53–serine 55 contributes to the L-glutamine binding site. Cysteine 85 acts as the Nucleophile in catalysis. Residues arginine 114 and isoleucine 142–arginine 143 each bind L-glutamine. Active-site charge relay system residues include histidine 179 and glutamate 181.

This sequence belongs to the glutaminase PdxT/SNO family. In terms of assembly, in the presence of PdxS, forms a dodecamer of heterodimers. Only shows activity in the heterodimer.

The enzyme catalyses aldehydo-D-ribose 5-phosphate + D-glyceraldehyde 3-phosphate + L-glutamine = pyridoxal 5'-phosphate + L-glutamate + phosphate + 3 H2O + H(+). It catalyses the reaction L-glutamine + H2O = L-glutamate + NH4(+). The protein operates within cofactor biosynthesis; pyridoxal 5'-phosphate biosynthesis. In terms of biological role, catalyzes the hydrolysis of glutamine to glutamate and ammonia as part of the biosynthesis of pyridoxal 5'-phosphate. The resulting ammonia molecule is channeled to the active site of PdxS. The sequence is that of Pyridoxal 5'-phosphate synthase subunit PdxT from Thermococcus onnurineus (strain NA1).